A 291-amino-acid polypeptide reads, in one-letter code: Nucleotide-binding protein Lm4b_02443 (291 aa).

13-20 (GMSGAGKT) serves as a coordination point for ATP. 63-66 (DLRG) serves as a coordination point for GTP.

This sequence belongs to the RapZ-like family.

Displays ATPase and GTPase activities. In Listeria monocytogenes serotype 4b (strain CLIP80459), this protein is Nucleotide-binding protein Lm4b_02443.